We begin with the raw amino-acid sequence, 135 residues long: Large ribosomal subunit protein uL16c (135 aa).

Met1 carries the post-translational modification N-methylmethionine.

In terms of assembly, component of the chloroplast large ribosomal subunit (LSU). Mature 70S chloroplast ribosomes of higher plants consist of a small (30S) and a large (50S) subunit. The 30S small subunit contains 1 molecule of ribosomal RNA (16S rRNA) and 24 different proteins. The 50S large subunit contains 3 rRNA molecules (23S, 5S and 4.5S rRNA) and 33 different proteins. Partially alpha-N-monomethylated at Met-1 (10%), whereas 90% of it is blocked to Edman degradation, probably by trimethylation.

Its subcellular location is the plastid. It is found in the chloroplast. Component of the chloroplast ribosome (chloro-ribosome), a dedicated translation machinery responsible for the synthesis of chloroplast genome-encoded proteins, including proteins of the transcription and translation machinery and components of the photosynthetic apparatus. This Spinacia oleracea (Spinach) protein is Large ribosomal subunit protein uL16c.